The sequence spans 196 residues: Carnitine operon protein CaiE (196 aa).

The disordered stretch occupies residues 173-196 (TQPLRQMEENRPRLQGTTDVTPKR). A compositionally biased stretch (polar residues) spans 187–196 (QGTTDVTPKR).

It belongs to the transferase hexapeptide repeat family.

Its pathway is amine and polyamine metabolism; carnitine metabolism. In terms of biological role, overproduction of CaiE stimulates the activity of CaiB and CaiD. The polypeptide is Carnitine operon protein CaiE (Shigella flexneri serotype 5b (strain 8401)).